We begin with the raw amino-acid sequence, 472 residues long: UDP-N-acetylmuramate--L-alanine ligase (472 aa).

122–128 (GTHGKTT) is a binding site for ATP.

Belongs to the MurCDEF family.

It localises to the cytoplasm. The catalysed reaction is UDP-N-acetyl-alpha-D-muramate + L-alanine + ATP = UDP-N-acetyl-alpha-D-muramoyl-L-alanine + ADP + phosphate + H(+). It participates in cell wall biogenesis; peptidoglycan biosynthesis. Its function is as follows. Cell wall formation. The sequence is that of UDP-N-acetylmuramate--L-alanine ligase from Thermobifida fusca (strain YX).